Consider the following 449-residue polypeptide: Protein adenylyltransferase FICD (449 aa).

Residues 15–35 (LLWGWGPILFGLLGSVFVLLL) form a helical membrane-spanning segment. 2 TPR repeats span residues 96–129 (AKAA…NPEF) and 130–163 (VEAL…SPCH). An Inhibitory (S/T)XXXE(G/N) motif motif is present at residues 220–225 (TVAIEG). Residues Glu-224, 250–251 (EQ), 358–360 (GNG), and Arg-364 each bind ATP. The 136-residue stretch at 275–410 (ITVNDILEIH…VRPFIRFIAK (136 aa)) folds into the Fido domain.

The protein belongs to the fic family.

The protein localises to the membrane. The enzyme catalyses L-tyrosyl-[protein] + ATP = O-(5'-adenylyl)-L-tyrosyl-[protein] + diphosphate. It carries out the reaction L-threonyl-[protein] + ATP = 3-O-(5'-adenylyl)-L-threonyl-[protein] + diphosphate. Its activity is regulated as follows. Adenylyltransferase activity is inhibited by the inhibitory helix present at the N-terminus: Glu-224 binds ATP and competes with ATP-binding at Arg-364, thereby preventing adenylyltransferase activity. Activation dissociates ATP-binding from Glu-224, allowing ordered binding of the entire ATP moiety with the alpha-phosphate in an orientation that is productive for accepting an incoming target hydroxyl side chain. Its function is as follows. Adenylyltransferase that mediates the addition of adenosine 5'-monophosphate (AMP) to specific residues of target proteins. This is Protein adenylyltransferase FICD (ficd) from Danio rerio (Zebrafish).